We begin with the raw amino-acid sequence, 345 residues long: D-erythrose-4-phosphate dehydrogenase (345 aa).

Position 11–12 (11–12 (RI)) interacts with NAD(+). Residues 158–160 (SCT), R204, 217–218 (TK), and R240 contribute to the substrate site. The active-site Nucleophile is C159. N322 provides a ligand contact to NAD(+).

This sequence belongs to the glyceraldehyde-3-phosphate dehydrogenase family. Epd subfamily. Homotetramer.

It localises to the cytoplasm. It carries out the reaction D-erythrose 4-phosphate + NAD(+) + H2O = 4-phospho-D-erythronate + NADH + 2 H(+). The protein operates within cofactor biosynthesis; pyridoxine 5'-phosphate biosynthesis; pyridoxine 5'-phosphate from D-erythrose 4-phosphate: step 1/5. In terms of biological role, catalyzes the NAD-dependent conversion of D-erythrose 4-phosphate to 4-phosphoerythronate. This Vibrio parahaemolyticus serotype O3:K6 (strain RIMD 2210633) protein is D-erythrose-4-phosphate dehydrogenase.